The following is a 190-amino-acid chain: Small ribosomal subunit protein eS7 (190 aa).

Belongs to the eukaryotic ribosomal protein eS7 family.

The protein is Small ribosomal subunit protein eS7 (RPS7) of Avicennia marina (Grey mangrove).